Consider the following 268-residue polypeptide: Tryptophan synthase alpha chain (268 aa).

Catalysis depends on proton acceptor residues Glu49 and Asp60.

Belongs to the TrpA family. Tetramer of two alpha and two beta chains.

It catalyses the reaction (1S,2R)-1-C-(indol-3-yl)glycerol 3-phosphate + L-serine = D-glyceraldehyde 3-phosphate + L-tryptophan + H2O. It functions in the pathway amino-acid biosynthesis; L-tryptophan biosynthesis; L-tryptophan from chorismate: step 5/5. Its function is as follows. The alpha subunit is responsible for the aldol cleavage of indoleglycerol phosphate to indole and glyceraldehyde 3-phosphate. The protein is Tryptophan synthase alpha chain of Salmonella paratyphi A (strain ATCC 9150 / SARB42).